Consider the following 153-residue polypeptide: ATP synthase subunit b' (153 aa).

A helical membrane pass occupies residues 23–40 (LMAIQVVALTYILNSLFF).

This sequence belongs to the ATPase B chain family. F-type ATPases have 2 components, F(1) - the catalytic core - and F(0) - the membrane proton channel. F(1) has five subunits: alpha(3), beta(3), gamma(1), delta(1), epsilon(1). F(0) has four main subunits: a(1), b(1), b'(1) and c(10-14). The alpha and beta chains form an alternating ring which encloses part of the gamma chain. F(1) is attached to F(0) by a central stalk formed by the gamma and epsilon chains, while a peripheral stalk is formed by the delta, b and b' chains.

The protein resides in the cellular thylakoid membrane. Its function is as follows. F(1)F(0) ATP synthase produces ATP from ADP in the presence of a proton or sodium gradient. F-type ATPases consist of two structural domains, F(1) containing the extramembraneous catalytic core and F(0) containing the membrane proton channel, linked together by a central stalk and a peripheral stalk. During catalysis, ATP synthesis in the catalytic domain of F(1) is coupled via a rotary mechanism of the central stalk subunits to proton translocation. In terms of biological role, component of the F(0) channel, it forms part of the peripheral stalk, linking F(1) to F(0). The b'-subunit is a diverged and duplicated form of b found in plants and photosynthetic bacteria. This Prochlorococcus marinus (strain MIT 9301) protein is ATP synthase subunit b'.